We begin with the raw amino-acid sequence, 486 residues long: MSGYIRTLFIRNRFSNYRLRSQIIKYKYSNVSYLNKSALRCGQATDSTHPHILQPGELTPRISAQEYKTRRDRVASLLEDNDFMIVTSAPVRHMCGAAFYEYHQDPNFYYLTGCLEPNAVLLMFKNGASGSYDCSLYLPSKNPYIEKWEGLRTGSTLGKKLFQIENVYDSSLASSVINALGKKSNRIFYNYQTGYLSKMPAASAPEFIQDTLTKLFRTSTQRSVDELLHPLRSIKSTAELECMKEAANISSNVYREIMRKRFEKEAEMSAEFNYRFCIGGCDRSAYVPVVAGGKNGLTIHYTINNDIFRPDEMVLVDAGGEFGGYVTDISRTWPINGKFSTVQRDLYQAVLNVQKKCIKYCCTSNGWSLADIHFESVKLMHEELKQVGIHGTKREITDILYPHSIGHEIGLEIHDCSTNNGYQPLRKNQVITIEPGLYVPEEDGWPQWAQGIAIRIEDSVIVGDDKPFVLTSAAPKEIEEIEALKK.

The N-terminal 19 residues, 1–19, are a transit peptide targeting the mitochondrion; the sequence is MSGYIRTLFIRNRFSNYRL. Residues aspartate 317, aspartate 328, histidine 407, glutamate 434, and glutamate 457 each coordinate Mn(2+).

The protein belongs to the peptidase M24B family. Requires Mn(2+) as cofactor.

It is found in the mitochondrion inner membrane. It catalyses the reaction The enzyme cleaves the 36-Pro-Pro-37 bond of cysteine desulfurase (EC 2.8.1.7) removing three amino acid residues (Tyr-Ser-Pro) from the N-terminus after cleavage by mitochondrial processing peptidase.. Aminopeptidase which cleaves preprotein intermediates that carry destabilizing N-ter amino acid residues after the mitochondrial processing peptidase (MPP) cleavage site and is thus critical for stabilization of the mitochondrial proteome. The sequence is that of Intermediate cleaving peptidase 55 (icp55) from Schizosaccharomyces pombe (strain 972 / ATCC 24843) (Fission yeast).